We begin with the raw amino-acid sequence, 209 residues long: High frequency lysogenization protein HflD homolog (209 aa).

This sequence belongs to the HflD family.

The protein localises to the cytoplasm. It is found in the cell inner membrane. The polypeptide is High frequency lysogenization protein HflD homolog (Proteus mirabilis (strain HI4320)).